The chain runs to 1113 residues: uncharacterized protein (1113 aa).

313–320 (GPPGTGKS) contacts ATP.

This sequence belongs to the DNA2/NAM7 helicase family.

This is an uncharacterized protein from Mycoplasma genitalium (strain ATCC 33530 / DSM 19775 / NCTC 10195 / G37) (Mycoplasmoides genitalium).